Reading from the N-terminus, the 647-residue chain is DNA ligase (647 aa).

Residues Asp30–Asp34, Ser79–Met80, and Glu105 contribute to the NAD(+) site. The N6-AMP-lysine intermediate role is filled by Lys107. Residues Arg128, Glu162, and Lys301 each contribute to the NAD(+) site. Zn(2+)-binding residues include Cys395, Cys398, Cys411, and Cys416. Positions Lys570–Glu647 constitute a BRCT domain.

Belongs to the NAD-dependent DNA ligase family. LigA subfamily. It depends on Mg(2+) as a cofactor. The cofactor is Mn(2+).

The catalysed reaction is NAD(+) + (deoxyribonucleotide)n-3'-hydroxyl + 5'-phospho-(deoxyribonucleotide)m = (deoxyribonucleotide)n+m + AMP + beta-nicotinamide D-nucleotide.. Its function is as follows. DNA ligase that catalyzes the formation of phosphodiester linkages between 5'-phosphoryl and 3'-hydroxyl groups in double-stranded DNA using NAD as a coenzyme and as the energy source for the reaction. It is essential for DNA replication and repair of damaged DNA. This chain is DNA ligase, found in Campylobacter jejuni subsp. doylei (strain ATCC BAA-1458 / RM4099 / 269.97).